The sequence spans 134 residues: Cell division protein SepF (134 aa).

The protein belongs to the SepF family. In terms of assembly, homodimer. Interacts with FtsZ.

It localises to the cytoplasm. Functionally, cell division protein that is part of the divisome complex and is recruited early to the Z-ring. Probably stimulates Z-ring formation, perhaps through the cross-linking of FtsZ protofilaments. Its function overlaps with FtsA. This is Cell division protein SepF from Caldanaerobacter subterraneus subsp. tengcongensis (strain DSM 15242 / JCM 11007 / NBRC 100824 / MB4) (Thermoanaerobacter tengcongensis).